We begin with the raw amino-acid sequence, 441 residues long: Ribosomal protein uS12 methylthiotransferase RimO (441 aa).

The region spanning 7–117 (PKISFVSLGC…VLEAVHRAKP (111 aa)) is the MTTase N-terminal domain. 6 residues coordinate [4Fe-4S] cluster: cysteine 16, cysteine 52, cysteine 81, cysteine 148, cysteine 152, and cysteine 155. Positions 134–371 (LTPRHYAYLK…MARQQVISAR (238 aa)) constitute a Radical SAM core domain. Residues 374-440 (KRKVGTRQQI…AYDLHGTVAG (67 aa)) enclose the TRAM domain.

Belongs to the methylthiotransferase family. RimO subfamily. [4Fe-4S] cluster is required as a cofactor.

The protein resides in the cytoplasm. The catalysed reaction is L-aspartate(89)-[ribosomal protein uS12]-hydrogen + (sulfur carrier)-SH + AH2 + 2 S-adenosyl-L-methionine = 3-methylsulfanyl-L-aspartate(89)-[ribosomal protein uS12]-hydrogen + (sulfur carrier)-H + 5'-deoxyadenosine + L-methionine + A + S-adenosyl-L-homocysteine + 2 H(+). In terms of biological role, catalyzes the methylthiolation of an aspartic acid residue of ribosomal protein uS12. The chain is Ribosomal protein uS12 methylthiotransferase RimO from Rhodopseudomonas palustris (strain BisB5).